Reading from the N-terminus, the 346-residue chain is MSTPTTPLSYKDAGVDIDAGNALVNNIKSAVKRTRRPEVMGNLGGFGALCELPTKYKHPVLVSGTDGVGTKLRLAIDYKKHDNVGVDLVAMCSNDLIVSGAEPLFFLDYYATGKLDVEVATAVVKGIAEGCVQSGCALIGGETAEMPGMYEGDDYDLAGFCVGVAEKEEIIDGTKVQDGDALIALASSGPHSNGFSLIRKVLEVSKADPEQELAGKPLIDHLLEPTKIYVKSLLKLIEEHDVHAMSHITGGGFWENIPRVLPEDCKAVVKSDSWQWPVVFNWLMEKGNISEFEMYRTFNCGVGMVVALPADKVESALNLLNAEGEKAWLIGDIAKRSGDEEQVEIL.

It belongs to the AIR synthase family.

The protein resides in the cytoplasm. It catalyses the reaction 2-formamido-N(1)-(5-O-phospho-beta-D-ribosyl)acetamidine + ATP = 5-amino-1-(5-phospho-beta-D-ribosyl)imidazole + ADP + phosphate + H(+). The protein operates within purine metabolism; IMP biosynthesis via de novo pathway; 5-amino-1-(5-phospho-D-ribosyl)imidazole from N(2)-formyl-N(1)-(5-phospho-D-ribosyl)glycinamide: step 2/2. The sequence is that of Phosphoribosylformylglycinamidine cyclo-ligase from Shewanella piezotolerans (strain WP3 / JCM 13877).